Reading from the N-terminus, the 1241-residue chain is ATP-dependent helicase/nuclease subunit A (1241 aa).

One can recognise a UvrD-like helicase ATP-binding domain in the interval 12-485; sequence SQWTDDQWKA…IDLAKNFRSR (474 aa). Residue 33–40 participates in ATP binding; the sequence is AAAGSGKT. Residues 505–805 enclose the UvrD-like helicase C-terminal domain; the sequence is GEIDYDADAE…RIMTIHKSKG (301 aa).

Belongs to the helicase family. AddA subfamily. In terms of assembly, heterodimer of AddA and AddB/RexB. Mg(2+) serves as cofactor.

It catalyses the reaction Couples ATP hydrolysis with the unwinding of duplex DNA by translocating in the 3'-5' direction.. The catalysed reaction is ATP + H2O = ADP + phosphate + H(+). In terms of biological role, the heterodimer acts as both an ATP-dependent DNA helicase and an ATP-dependent, dual-direction single-stranded exonuclease. Recognizes the chi site generating a DNA molecule suitable for the initiation of homologous recombination. The AddA nuclease domain is required for chi fragment generation; this subunit has the helicase and 3' -&gt; 5' nuclease activities. This is ATP-dependent helicase/nuclease subunit A from Bacillus cereus (strain Q1).